A 242-amino-acid chain; its full sequence is ATP synthase subunit 4, mitochondrial (242 aa).

Residues 1–35 constitute a mitochondrion transit peptide; it reads MSFRALTMRSAVARTALNNTIRSARVATPYLGIRH.

This sequence belongs to the eukaryotic ATPase B chain family. As to quaternary structure, F-type ATPases have 2 components, CF(1) - the catalytic core - and CF(0) - the membrane proton channel. In yeast, the dimeric form of ATP synthase consists of 17 polypeptides: alpha, beta, gamma, delta, epsilon, 4 (B), 5 (OSCP), 6 (A), 8, 9 (C), d, E (Tim11), f, g, h, i/j and k.

It localises to the mitochondrion. The protein localises to the mitochondrion inner membrane. Functionally, mitochondrial membrane ATP synthase (F(1)F(0) ATP synthase or Complex V) produces ATP from ADP in the presence of a proton gradient across the membrane which is generated by electron transport complexes of the respiratory chain. F-type ATPases consist of two structural domains, F(1) - containing the extramembraneous catalytic core, and F(0) - containing the membrane proton channel, linked together by a central stalk and a peripheral stalk. During catalysis, ATP synthesis in the catalytic domain of F(1) is coupled via a rotary mechanism of the central stalk subunits to proton translocation. Part of the complex F(0) domain and the peripheric stalk, which acts as a stator to hold the catalytic alpha(3)beta(3) subcomplex and subunit a/ATP6 static relative to the rotary elements. The chain is ATP synthase subunit 4, mitochondrial (ATP4) from Candida glabrata (strain ATCC 2001 / BCRC 20586 / JCM 3761 / NBRC 0622 / NRRL Y-65 / CBS 138) (Yeast).